A 405-amino-acid chain; its full sequence is Dynactin subunit 2 (405 aa).

The tract at residues 1-25 (MADPKYADLPGIARNEPDVYETSDL) is disordered. An N-acetylalanine modification is found at A2. Y6 bears the Phosphotyrosine mark. S85 carries the phosphoserine modification. The residue at position 88 (Y88) is a Phosphotyrosine. The stretch at 105 to 132 (YQRLLHEVQELTTEVEKIKMTVKESATE) forms a coiled coil. Residue T136 is modified to Phosphothreonine. Positions 187-207 (KNTKGAGSGGKTTSGSPPDSS) are disordered. S324 carries the post-translational modification Phosphoserine.

The protein belongs to the dynactin subunit 2 family. In terms of assembly, subunit of dynactin, a multiprotein complex part of a tripartite complex with dynein and a adapter, such as BICDL1, BICD2 or HOOK3. The dynactin complex is built around ACTR1A/ACTB filament and consists of an actin-related filament composed of a shoulder domain, a pointed end and a barbed end. Its length is defined by its flexible shoulder domain. The soulder is composed of 2 DCTN1 subunits, 4 DCTN2 and 2 DCTN3. The 4 DCNT2 (via N-terminus) bind the ACTR1A filament and act as molecular rulers to determine the length. The pointed end is important for binding dynein-dynactin cargo adapters and consists of 4 subunits: ACTR10, DCNT4, DCTN5 and DCTN6. The barbed end is composed of a CAPZA1:CAPZB heterodimers, which binds ACTR1A/ACTB filament and dynactin and stabilizes dynactin. Interacts with BICD2 and CEP135. Interacts with DYNAP. Interacts with ECPAS. Interacts with MAPRE1.

The protein resides in the cytoplasm. The protein localises to the cytoskeleton. Its subcellular location is the microtubule organizing center. It is found in the centrosome. It localises to the membrane. In terms of biological role, part of the dynactin complex that activates the molecular motor dynein for ultra-processive transport along microtubules. In the dynactin soulder domain, binds the ACTR1A filament and acts as a molecular ruler to determine the length. Modulates cytoplasmic dynein binding to an organelle, and plays a role in prometaphase chromosome alignment and spindle organization during mitosis. Involved in anchoring microtubules to centrosomes. May play a role in synapse formation during brain development. This chain is Dynactin subunit 2 (DCTN2), found in Sus scrofa (Pig).